The primary structure comprises 129 residues: Ig lambda-1 chain V regions MOPC 104E/RPC20/J558/S104 (129 aa).

Residues 1 to 19 (MAWISLILSLLALSSGAIS) form the signal peptide. Glutamine 20 is subject to Pyrrolidone carboxylic acid. The region spanning 20-125 (QAVVTQESAL…HWVFGGGTKL (106 aa)) is the Ig-like domain.

The sequence is that of Ig lambda-1 chain V regions MOPC 104E/RPC20/J558/S104 from Mus musculus (Mouse).